The sequence spans 700 residues: DNA ligase 2 (700 aa).

NAD(+)-binding positions include Asp-42–Asp-46 and Ser-89–Leu-90. The N6-AMP-lysine intermediate role is filled by Lys-122. NAD(+) contacts are provided by Arg-143, Glu-177, Lys-303, and Lys-327. Zn(2+)-binding residues include Cys-421, Cys-424, Cys-437, and Cys-443. Residues Met-590 to Ala-621 are disordered. Residues Gly-615 to Ser-700 enclose the BRCT domain.

It belongs to the NAD-dependent DNA ligase family. LigA subfamily. The cofactor is Mg(2+). Mn(2+) is required as a cofactor.

It catalyses the reaction NAD(+) + (deoxyribonucleotide)n-3'-hydroxyl + 5'-phospho-(deoxyribonucleotide)m = (deoxyribonucleotide)n+m + AMP + beta-nicotinamide D-nucleotide.. In terms of biological role, DNA ligase that catalyzes the formation of phosphodiester linkages between 5'-phosphoryl and 3'-hydroxyl groups in double-stranded DNA using NAD as a coenzyme and as the energy source for the reaction. It is essential for DNA replication and repair of damaged DNA. The chain is DNA ligase 2 from Streptomyces coelicolor (strain ATCC BAA-471 / A3(2) / M145).